The primary structure comprises 546 residues: Probable protein kinase UbiB (546 aa).

One can recognise a Protein kinase domain in the interval 124-502; that stretch reads DFDIKPLASA…RVRQGQSRYL (379 aa). Residues 130 to 138 and Lys-153 each bind ATP; that span reads LASASIAQV. Asp-288 (proton acceptor) is an active-site residue. 2 helical membrane-spanning segments follow: residues 501–521 and 522–542; these read YLFG…INRP and DWQM…LIGW.

This sequence belongs to the ABC1 family. UbiB subfamily.

The protein localises to the cell inner membrane. The protein operates within cofactor biosynthesis; ubiquinone biosynthesis [regulation]. In terms of biological role, is probably a protein kinase regulator of UbiI activity which is involved in aerobic coenzyme Q (ubiquinone) biosynthesis. The polypeptide is Probable protein kinase UbiB (Enterobacter sp. (strain 638)).